The primary structure comprises 100 residues: MMGERIQNCNADEGLITLCILSSLSLLDRNLMSCNSNSSLVANGSCLPPLLIFAVGFPWSKLVLASFSLFKSTSDVFLIVAIVSLFLISSASPEVDCRCG.

A run of 2 helical transmembrane segments spans residues 50 to 70 (LLIF…FSLF) and 75 to 95 (DVFL…SPEV).

It is found in the membrane. This is an uncharacterized protein from Saccharomyces cerevisiae (strain ATCC 204508 / S288c) (Baker's yeast).